Here is a 288-residue protein sequence, read N- to C-terminus: ATP synthase gamma chain (288 aa).

It belongs to the ATPase gamma chain family. In terms of assembly, F-type ATPases have 2 components, CF(1) - the catalytic core - and CF(0) - the membrane proton channel. CF(1) has five subunits: alpha(3), beta(3), gamma(1), delta(1), epsilon(1). CF(0) has three main subunits: a, b and c.

The protein localises to the cell inner membrane. Its function is as follows. Produces ATP from ADP in the presence of a proton gradient across the membrane. The gamma chain is believed to be important in regulating ATPase activity and the flow of protons through the CF(0) complex. The polypeptide is ATP synthase gamma chain (Acidovorax ebreus (strain TPSY) (Diaphorobacter sp. (strain TPSY))).